Reading from the N-terminus, the 411-residue chain is Citrate synthase (411 aa).

Catalysis depends on residues His-304 and Asp-363.

This sequence belongs to the citrate synthase family.

The catalysed reaction is oxaloacetate + acetyl-CoA + H2O = citrate + CoA + H(+). It functions in the pathway carbohydrate metabolism; tricarboxylic acid cycle; isocitrate from oxaloacetate: step 1/2. The sequence is that of Citrate synthase (gltA) from Rickettsia massiliae.